The primary structure comprises 320 residues: MRSAQVYRWQIPMDAGVVLRDRRLKTRDGLYVCLREGEREGWGEISPLPGFSQETWEEAQSVLLAWVNNWLAGDCELPQMPSVAFGVSCALAELTDTLPQAANYRAAPLCNGDPDDLILKLADMPGEKVAKVKVGLYEAVRDGMVVNLLLEAIPDLHLRLDANRAWTPLKGQQFAKYVNPDYRDRIAFLEEPCKTRDDSRAFARETGIAIAWDESLREPDFAFVAEEGVRAVVIKPTLTGSLEKVREQVQAAHALGLTAVISSSIESSLGLTQLARIAAWLTPDTIPGLDTLDLMQAQQVRRWPGSTLPVVEVDALERLL.

Lysine 133 (proton donor) is an active-site residue. Positions 161, 190, and 213 each coordinate Mg(2+). Residue lysine 235 is the Proton acceptor of the active site.

It belongs to the mandelate racemase/muconate lactonizing enzyme family. MenC type 1 subfamily. It depends on a divalent metal cation as a cofactor.

It carries out the reaction (1R,6R)-6-hydroxy-2-succinyl-cyclohexa-2,4-diene-1-carboxylate = 2-succinylbenzoate + H2O. The protein operates within quinol/quinone metabolism; 1,4-dihydroxy-2-naphthoate biosynthesis; 1,4-dihydroxy-2-naphthoate from chorismate: step 4/7. Its pathway is quinol/quinone metabolism; menaquinone biosynthesis. In terms of biological role, converts 2-succinyl-6-hydroxy-2,4-cyclohexadiene-1-carboxylate (SHCHC) to 2-succinylbenzoate (OSB). The chain is o-succinylbenzoate synthase from Escherichia coli (strain K12 / MC4100 / BW2952).